The primary structure comprises 428 residues: Enolase (428 aa).

Residue Q165 participates in (2R)-2-phosphoglycerate binding. E207 serves as the catalytic Proton donor. The Mg(2+) site is built by D244, E283, and D310. The (2R)-2-phosphoglycerate site is built by K335, R364, S365, and K386. K335 functions as the Proton acceptor in the catalytic mechanism.

This sequence belongs to the enolase family. Requires Mg(2+) as cofactor.

The protein resides in the cytoplasm. It localises to the secreted. Its subcellular location is the cell surface. It carries out the reaction (2R)-2-phosphoglycerate = phosphoenolpyruvate + H2O. Its pathway is carbohydrate degradation; glycolysis; pyruvate from D-glyceraldehyde 3-phosphate: step 4/5. Catalyzes the reversible conversion of 2-phosphoglycerate (2-PG) into phosphoenolpyruvate (PEP). It is essential for the degradation of carbohydrates via glycolysis. In Chlamydia pneumoniae (Chlamydophila pneumoniae), this protein is Enolase.